Consider the following 547-residue polypeptide: Chaperonin GroEL (547 aa).

ATP is bound by residues 29–32 (TMGP), Lys-50, 86–90 (DGTTT), Gly-414, 477–479 (NAA), and Asp-493.

It belongs to the chaperonin (HSP60) family. As to quaternary structure, forms a cylinder of 14 subunits composed of two heptameric rings stacked back-to-back. Interacts with the co-chaperonin GroES.

The protein localises to the cytoplasm. The enzyme catalyses ATP + H2O + a folded polypeptide = ADP + phosphate + an unfolded polypeptide.. Together with its co-chaperonin GroES, plays an essential role in assisting protein folding. The GroEL-GroES system forms a nano-cage that allows encapsulation of the non-native substrate proteins and provides a physical environment optimized to promote and accelerate protein folding. This Campylobacter rectus (Wolinella recta) protein is Chaperonin GroEL.